The chain runs to 332 residues: Probable isoaspartyl peptidase/L-asparaginase CG7860 (332 aa).

T188 acts as the Nucleophile in catalysis. Substrate is bound by residues 216-219 (RIGD) and 239-242 (TGHG).

This sequence belongs to the Ntn-hydrolase family. In terms of assembly, heterodimer of an alpha and beta chain produced by autocleavage. In terms of processing, cleaved into an alpha and beta chain by autocatalysis; this activates the enzyme. The N-terminal residue of the beta subunit is responsible for the nucleophile hydrolase activity.

The enzyme catalyses L-asparagine + H2O = L-aspartate + NH4(+). The catalysed reaction is Cleavage of a beta-linked Asp residue from the N-terminus of a polypeptide.. Has both L-asparaginase and beta-aspartyl peptidase activity. Does not have aspartylglucosaminidase activity and is inactive toward GlcNAc-L-Asn. Likewise, has no activity toward glutamine. This is Probable isoaspartyl peptidase/L-asparaginase CG7860 from Drosophila melanogaster (Fruit fly).